A 241-amino-acid polypeptide reads, in one-letter code: Cysteine-rich secretory protein 3 (241 aa).

The signal sequence occupies residues Met1–Leu19. Residues Ser44–Tyr170 enclose the SCP domain. Residues Asn118, Asn132, and Asn175 are each glycosylated (N-linked (GlcNAc...) asparagine). Intrachain disulfides connect Cys194-Cys201, Cys197-Cys206, Cys210-Cys241, Cys219-Cys235, and Cys226-Cys239. A ShKT domain is found at Cys210–Cys241.

Belongs to the CRISP family. As to quaternary structure, interacts with A1BG. Interacts with KNG1 isoform LMW. As to expression, expressed in submandibular gland.

It is found in the cytoplasmic vesicle. The protein resides in the secretory vesicle. In terms of biological role, this protein is supposed to help spermatozoa undergo functional maturation while they move from the testis to the ductus deferens. The sequence is that of Cysteine-rich secretory protein 3 (Crisp3) from Mus musculus (Mouse).